The chain runs to 161 residues: Allophycocyanin beta chain (161 aa).

N71 bears the N4-methylasparagine mark. C81 is a (2R,3E)-phycocyanobilin binding site.

Belongs to the phycobiliprotein family. In terms of assembly, heterodimer of an alpha and a beta chain. Post-translationally, contains one covalently linked phycocyanobilin chromophore.

It is found in the cellular thylakoid membrane. In terms of biological role, light-harvesting photosynthetic bile pigment-protein from the phycobiliprotein complex. Allophycocyanin has a maximum absorption at approximately 650 nanometers. The protein is Allophycocyanin beta chain (apcB) of Mastigocladus laminosus (Fischerella sp.).